The chain runs to 155 residues: SsrA-binding protein (155 aa).

Residues 136–155 (RESLKRRQDQRDMQRAMKNY) are disordered.

Belongs to the SmpB family.

Its subcellular location is the cytoplasm. Functionally, required for rescue of stalled ribosomes mediated by trans-translation. Binds to transfer-messenger RNA (tmRNA), required for stable association of tmRNA with ribosomes. tmRNA and SmpB together mimic tRNA shape, replacing the anticodon stem-loop with SmpB. tmRNA is encoded by the ssrA gene; the 2 termini fold to resemble tRNA(Ala) and it encodes a 'tag peptide', a short internal open reading frame. During trans-translation Ala-aminoacylated tmRNA acts like a tRNA, entering the A-site of stalled ribosomes, displacing the stalled mRNA. The ribosome then switches to translate the ORF on the tmRNA; the nascent peptide is terminated with the 'tag peptide' encoded by the tmRNA and targeted for degradation. The ribosome is freed to recommence translation, which seems to be the essential function of trans-translation. The protein is SsrA-binding protein of Nostoc sp. (strain PCC 7120 / SAG 25.82 / UTEX 2576).